The sequence spans 771 residues: DNA helicase/primase complex-associated protein (771 aa).

It belongs to the herpesviridae HEPA family. As to quaternary structure, associates with the primase and the helicase to form the helicase-primase complex. Interacts with the origin-binding protein. Interacts with the polymerase catalytic subunit.

It is found in the host nucleus. In terms of biological role, component of the helicase/primase complex. Unwinds the DNA at the replication forks and generates single-stranded DNA for both leading and lagging strand synthesis. The primase synthesizes short RNA primers on the lagging strand that the polymerase presumably elongates using dNTPs. The primase-associated factor has no known catalytic activity in the complex and may serve to facilitate the formation of the replisome by directly interacting with the origin-binding protein and the polymerase. The polypeptide is DNA helicase/primase complex-associated protein (Homo sapiens (Human)).